The primary structure comprises 309 residues: Elongator complex protein 5 (309 aa).

Phosphoserine occurs at positions 3 and 4.

The protein belongs to the ELP5 family. Component of the elongator complex, which consists of ELP1/IKI3, ELP2, ELP3, ELP4, ELP5/IKI1 and ELP6. The elongator complex is composed of two copies of the Elp123 subcomplex (composed of ELP1/IKI3, ELP2 and ELP3) and two copies of the Elp456 subcomplex (composed of ELP4, ELP5/IKI1 and ELP6). The Elp123 subcomplex forms a two-lobed scaffold, which binds the Elp456 subcomplex asymmetrically. In each lobe, ELP2 is tightly sandwiched between ELP1/IKI3 and ELP3. The Elp123 subcomplex binds tRNA through ELP1/IKI3 and ELP3 and can bind 2 tRNAs simultaneously. tRNA-binding by the Elp123 subcomplex induces conformational rearrangements which precisely position the targeted anticodon base in the active site. The Elp456 subcomplex binds tRNA and has ATPase activity. Interacts with KTI11/DPH3.

The protein localises to the cytoplasm. It localises to the nucleus. Its pathway is tRNA modification; 5-methoxycarbonylmethyl-2-thiouridine-tRNA biosynthesis. Functionally, component of the elongator complex which is required for multiple tRNA modifications, including mcm5U (5-methoxycarbonylmethyl uridine), mcm5s2U (5-methoxycarbonylmethyl-2-thiouridine), and ncm5U (5-carbamoylmethyl uridine). The elongator complex catalyzes formation of carboxymethyluridine in the wobble base at position 34 in tRNAs. It functions as a gamma-toxin target (TOT); disruption of the complex confers resistance to Kluyveromyces lactis toxin zymocin (pGKL1 killer toxin). May also be involved in sensitivity to Pichia inositovora toxin. This is Elongator complex protein 5 (IKI1) from Saccharomyces cerevisiae (strain ATCC 204508 / S288c) (Baker's yeast).